Reading from the N-terminus, the 342-residue chain is RNA 3'-terminal phosphate cyclase (342 aa).

Residues Gln-103 and 283 to 287 (YLADQ) contribute to the ATP site. His-308 serves as the catalytic Tele-AMP-histidine intermediate.

The protein belongs to the RNA 3'-terminal cyclase family. Type 1 subfamily.

Its subcellular location is the cytoplasm. It catalyses the reaction a 3'-end 3'-phospho-ribonucleotide-RNA + ATP = a 3'-end 2',3'-cyclophospho-ribonucleotide-RNA + AMP + diphosphate. Functionally, catalyzes the conversion of 3'-phosphate to a 2',3'-cyclic phosphodiester at the end of RNA. The mechanism of action of the enzyme occurs in 3 steps: (A) adenylation of the enzyme by ATP; (B) transfer of adenylate to an RNA-N3'P to produce RNA-N3'PP5'A; (C) and attack of the adjacent 2'-hydroxyl on the 3'-phosphorus in the diester linkage to produce the cyclic end product. The biological role of this enzyme is unknown but it is likely to function in some aspects of cellular RNA processing. The sequence is that of RNA 3'-terminal phosphate cyclase from Shigella dysenteriae serotype 1 (strain Sd197).